The primary structure comprises 158 residues: 14-3-3 protein gamma (158 aa).

The segment at 1 to 158 (AAAMKNVTEL…TSDQQDDDGG (158 aa)) is interaction with SPATA18/MIEAP. S48 carries the post-translational modification Phosphoserine. At Y60 the chain carries Phosphotyrosine. Position 72 is a phosphothreonine (T72). A Phosphoserine modification is found at S130. Residue T149 is modified to Phosphothreonine. A Phosphoserine modification is found at S150.

It belongs to the 14-3-3 family. In terms of assembly, homodimer. Part of a complex that contains DSG3, PKP1, YAP1 and YWHAG; the complex is required for localization of DSG3 and YAP1 to the cell membrane in keratinocytes. Interacts with SAMSN1. Interacts with RAF1, SSH1 and CRTC2/TORC2. Interacts with ABL1 (phosphorylated form); the interaction retains it in the cytoplasm. Interacts with GAB2. Interacts with MDM4 (phosphorylated); negatively regulates MDM4 activity toward TP53. Interacts with PKA-phosphorylated AANAT and SIRT2. Interacts with the 'Thr-369' phosphorylated form of DAPK2. Interacts with PI4KB, TBC1D22A and TBC1D22B. Interacts with SLITRK1. Interacts with LRRK2; this interaction is dependent on LRRK2 phosphorylation. Interacts with MARK2 and MARK3. Interacts with MEFV. Interacts with ENDOG, TSC2 and PIK3C3; interaction with ENDOG weakens its interaction with TSC2 and PIK3C3. Interacts with (phosphorylated) WDR24. Interacts with BEST1; this interaction promotes L-glutamate channel activity leading to the positive regulation of NMDA glutamate receptor activity through the L-glutamate secretion. Interacts with PKP1 (when phosphorylated); the interaction results in translocation of PKP1 to the cytoplasm and loss of intercellular adhesion in keratinocytes. Interacts with SPATA18/MIEAP; a protein that also plays a role in MALM. Phosphorylated by various PKC isozymes.

It is found in the cytoplasm. The protein resides in the cytosol. It localises to the mitochondrion matrix. Its function is as follows. Adapter protein implicated in the regulation of a large spectrum of both general and specialized signaling pathways. Binds to a large number of partners, usually by recognition of a phosphoserine or phosphothreonine motif. Binding generally results in the modulation of the activity of the binding partner. Promotes inactivation of WDR24 component of the GATOR2 complex by binding to phosphorylated WDR24. Participates in the positive regulation of NMDA glutamate receptor activity by promoting the L-glutamate secretion through interaction with BEST1. Reduces keratinocyte intercellular adhesion, via interacting with PKP1 and sequestering it in the cytoplasm, thereby reducing its incorporation into desmosomes. Plays a role in mitochondrial protein catabolic process (also named MALM) that promotes the degradation of damaged proteins inside mitochondria. The protein is 14-3-3 protein gamma of Ovis aries (Sheep).